The following is a 264-amino-acid chain: MRTRSTISTPNGITWYYEQEGTGPDVVLVPDGLGECQMFDSSVSQIAAQGFRVTTFDMPGMSRSAKAPPETYTEVTAQKLASYVISVLDALDIKHATVWGCSSGASTVVALLLGYPDRIRNAMCHELPTKLLDHLSNTAVLEDEEISKILANVMLNDVSGGSEAWQAMGDEVHARLHKNYPVWARGYPRTIPPSAPVKDLEALRGKPLDWTVGAATPTESFFDNIVTATKAGVNIGLLPGMHFPYVSHPDVFAKYVVETTQKHL.

An AB hydrolase-1 domain is found at 27–207 (VLVPDGLGEC…KDLEALRGKP (181 aa)). Zearalenone is bound by residues glycine 32, serine 102, and serine 103. Serine 102 is an active-site residue. Residue glutamate 126 is part of the active site. Tryptophan 183, tyrosine 187, serine 220, and histidine 242 together coordinate zearalenone. Histidine 242 is a catalytic residue.

The protein belongs to the AB hydrolase superfamily. Hydrolase RutD family. Homodimer.

It catalyses the reaction zearalenone + H2O = hydrolyzed zearalenone + H(+). Lactonohydrolase that specifically hydrolyzes and deactivates the mycotoxin zearalenone (ZEN) and its zearalenol (ZOL) derivatives. ZHD101 prefers ZEN to ZOL as its substrate, but ZOL, especially the alpha-form, shows higher estrogenic toxicity than ZEN. The chain is Zearalenone hydrolase from Bionectria ochroleuca (Gliocladium roseum).